The following is an 834-amino-acid chain: Serine-rich coiled-coil domain-containing protein 2 (834 aa).

Positions 169–212 (PKSQLNGFYGNRSAGSMQRPRANSCATRSSSGESLAQSPDSSKS) are disordered. Polar residues predominate over residues 192-212 (SCATRSSSGESLAQSPDSSKS). The residue at position 223 (Ser223) is a Phosphoserine. Residues 426 to 443 (RTRITPEEMSLKEEKHEN) show a composition bias toward basic and acidic residues. Disordered stretches follow at residues 426–454 (RTRI…DSPK), 477–509 (CTKH…SSDG), 573–628 (NMNR…SPYR), 695–714 (LHDI…GDKV), and 780–834 (APSF…RGPQ). The residue at position 452 (Ser452) is a Phosphoserine. Positions 497–507 (SSFELSPSDSS) are enriched in low complexity. Basic and acidic residues-rich tracts occupy residues 573 to 584 (NMNRFDRPDRNV) and 601 to 611 (GQEHYHLSHPD). Residues 712–749 (DKVYKNEDLLNEIKQLKDEIKKKDEKIQLLELQLATQH) adopt a coiled-coil conformation. Composition is skewed to polar residues over residues 781–790 (PSFSPWQGSF) and 804–816 (TSST…PSQT).

This sequence belongs to the CCSER family.

It is found in the cytoplasm. It localises to the cytoskeleton. Microtubule-binding protein which might play a role in microtubule bundling. The polypeptide is Serine-rich coiled-coil domain-containing protein 2 (CCSER2) (Homo sapiens (Human)).